The chain runs to 375 residues: uncharacterized protein (375 aa).

The Cytoplasmic segment spans residues 1–2 (MR). Residues 3 to 23 (WYSYVIPAVILSIIAISGVWW) traverse the membrane as a helical; Signal-anchor for type II membrane protein segment. The Lumenal portion of the chain corresponds to 24–375 (NATLGTRLDQ…YIEQRLFPQP (352 aa)).

It belongs to the glycosyltransferase 34 family.

Its subcellular location is the endoplasmic reticulum membrane. The protein localises to the golgi apparatus membrane. This is an uncharacterized protein from Schizosaccharomyces pombe (strain 972 / ATCC 24843) (Fission yeast).